Consider the following 494-residue polypeptide: Transcriptional regulator of yeast form adherence 3 (494 aa).

One can recognise an SPX domain in the interval 1-360; it reads MKFAKTLERT…SLGIQKTFPK (360 aa). The RING-type zinc finger occupies 398-437; it reads CPICMNIAYKPIRLSCGHLFCVRCLVKMKQDDKTSCPLCR.

Its subcellular location is the nucleus. Transcription factor required for yeast cell adherence to silicone substrate. This chain is Transcriptional regulator of yeast form adherence 3 (TRY3), found in Candida albicans (strain SC5314 / ATCC MYA-2876) (Yeast).